We begin with the raw amino-acid sequence, 358 residues long: Histidinol-phosphate aminotransferase (358 aa).

At Lys210 the chain carries N6-(pyridoxal phosphate)lysine.

This sequence belongs to the class-II pyridoxal-phosphate-dependent aminotransferase family. Histidinol-phosphate aminotransferase subfamily. As to quaternary structure, homodimer. Requires pyridoxal 5'-phosphate as cofactor.

The enzyme catalyses L-histidinol phosphate + 2-oxoglutarate = 3-(imidazol-4-yl)-2-oxopropyl phosphate + L-glutamate. It participates in amino-acid biosynthesis; L-histidine biosynthesis; L-histidine from 5-phospho-alpha-D-ribose 1-diphosphate: step 7/9. The protein is Histidinol-phosphate aminotransferase of Clostridium beijerinckii (strain ATCC 51743 / NCIMB 8052) (Clostridium acetobutylicum).